The primary structure comprises 103 residues: MAVSQNIRIRLKAFDYRVLDASTQEIVNTAKRTGAQVRGPIPLPNKIEKFTVLRGPHVDKKSRDQWEIRTHKRLLDIVDPTPQTVDALMKLDLAAGVDVEIKV.

It belongs to the universal ribosomal protein uS10 family. In terms of assembly, part of the 30S ribosomal subunit.

Its function is as follows. Involved in the binding of tRNA to the ribosomes. The protein is Small ribosomal subunit protein uS10 of Jannaschia sp. (strain CCS1).